A 375-amino-acid polypeptide reads, in one-letter code: Trans-enoyl reductase BOA5 (375 aa).

Residues 1–16 (MQAVIQTGPGTLQLTE) show a composition bias toward polar residues. A disordered region spans residues 1–21 (MQAVIQTGPGTLQLTENVPKP). 42–45 (SDWK) is a binding site for NADP(+). 121–128 (VGIVTTGL) is a substrate binding site. Residues 147 to 168 (GSAAPQKTRVGPRGWSGGDALT) form a disordered region. Residues 185-188 (STST), 208-211 (SPHN), Tyr226, and 273-274 (LD) each bind NADP(+). Residue 294-298 (ALTIF) coordinates substrate. 363 to 364 (VS) is an NADP(+) binding site.

The protein belongs to the zinc-containing alcohol dehydrogenase family. As to quaternary structure, monomer.

The protein operates within polyketide biosynthesis. Functionally, trans-enoyl reductase; part of the gene cluster A that mediates the biosynthesis of botcinic acid and its botcinin derivatives, acetate-derived polyketides that contribute to virulence when combined with the sesquiterpene botrydial. Botcinic acid and its derivatives have been shown to induce chlorosis and necrosis during host plant infection, but also have antifungal activities. Two polyketide synthases, BOA6 and BOA9, are involved in the biosynthesis of botcinins. BOA6 mediates the formation of the per-methylated tetraketide core by condensation of four units of malonyl-CoA with one unit of acetyl-CoA, which would be methylated in activated methylene groups to yield a bicyclic acid intermediate that could then either be converted to botrylactone derivatives or lose the starter acetate unit through a retro-Claisen type C-C bond cleavage to yield botcinin derivatives. The second polyketide synthase, BOA9, is probably required for the biosynthesis of the tetraketide side chain of botcinins. The methyltransferase (MT) domain within BOA6 is probably responsible for the incorporation of four methyl groups. The trans-enoyl reductase BOA5 might take over the enoyl reductase function of BOA6 that misses an ER domain. The monooxygenases BOA2, BOA3 and BOA4 might be involved in further hydroxylations at C4, C5 and C8, whereas BOA7, close to BOA9, could potentially be involved in the hydroxylation at C4 in the side chain of botcinins. This chain is Trans-enoyl reductase BOA5, found in Botryotinia fuckeliana (strain B05.10) (Noble rot fungus).